Here is a 253-residue protein sequence, read N- to C-terminus: Kallikrein-7 (253 aa).

A signal peptide spans 1–22 (MARSLLLPLQILLLSLALETAG). The propeptide at 23–29 (EEAQGDK) is activation peptide. Positions 30-250 (IIDGAPCARG…FTKWINDTMK (221 aa)) constitute a Peptidase S1 domain. 6 cysteine pairs are disulfide-bonded: cysteine 36/cysteine 165, cysteine 55/cysteine 71, cysteine 137/cysteine 239, cysteine 144/cysteine 211, cysteine 176/cysteine 190, and cysteine 201/cysteine 226. Residues histidine 70 and aspartate 112 each act as charge relay system in the active site. Serine 205 serves as the catalytic Charge relay system. N-linked (GlcNAc...) asparagine glycosylation occurs at asparagine 246.

This sequence belongs to the peptidase S1 family. Kallikrein subfamily. In terms of tissue distribution, abundantly expressed in the skin and is expressed by keratinocytes in the epidermis. Also expressed in the brain, mammary gland, cerebellum, spinal cord and kidney. Lower levels in salivary glands, uterus, thymus, thyroid, placenta, trachea and testis. Up-regulated in ovarian carcinoma, especially late-stage serous carcinoma, compared with normal ovaries and benign adenomas (at protein level).

The protein localises to the secreted. The catalysed reaction is Cleavage of proteins with aromatic side chains in the P1 position.. With respect to regulation, inhibited by Zn2+ and Cu2+ at low micromolar concentrations. Inhibited by SERPINA12. Its function is as follows. May catalyze the degradation of intercellular cohesive structures in the cornified layer of the skin in the continuous shedding of cells from the skin surface. Specific for amino acid residues with aromatic side chains in the P1 position. Cleaves insulin A chain at '14-Tyr-|-Gln-15' and insulin B chain at '6-Leu-|-Cys-7', '16-Tyr-|-Leu-17', '25-Phe-|-Tyr-26' and '26-Tyr-|-Thr-27'. Could play a role in the activation of precursors to inflammatory cytokines. The protein is Kallikrein-7 (KLK7) of Homo sapiens (Human).